The chain runs to 200 residues: Imidazole glycerol phosphate synthase subunit HisH (200 aa).

The Glutamine amidotransferase type-1 domain maps to 3–200; sequence EVALIDAGGA…LRNFLEMDAA (198 aa). Cys-78 serves as the catalytic Nucleophile. Catalysis depends on residues His-179 and Glu-181.

Heterodimer of HisH and HisF.

It localises to the cytoplasm. The enzyme catalyses 5-[(5-phospho-1-deoxy-D-ribulos-1-ylimino)methylamino]-1-(5-phospho-beta-D-ribosyl)imidazole-4-carboxamide + L-glutamine = D-erythro-1-(imidazol-4-yl)glycerol 3-phosphate + 5-amino-1-(5-phospho-beta-D-ribosyl)imidazole-4-carboxamide + L-glutamate + H(+). It catalyses the reaction L-glutamine + H2O = L-glutamate + NH4(+). The protein operates within amino-acid biosynthesis; L-histidine biosynthesis; L-histidine from 5-phospho-alpha-D-ribose 1-diphosphate: step 5/9. IGPS catalyzes the conversion of PRFAR and glutamine to IGP, AICAR and glutamate. The HisH subunit catalyzes the hydrolysis of glutamine to glutamate and ammonia as part of the synthesis of IGP and AICAR. The resulting ammonia molecule is channeled to the active site of HisF. This is Imidazole glycerol phosphate synthase subunit HisH from Xylella fastidiosa (strain Temecula1 / ATCC 700964).